A 209-amino-acid polypeptide reads, in one-letter code: Uracil phosphoribosyltransferase (209 aa).

Residues arginine 79, arginine 104, and 131 to 139 each bind 5-phospho-alpha-D-ribose 1-diphosphate; that span reads DPMLATGGS. Residues isoleucine 194 and 199 to 201 each bind uracil; that span reads GDA. Aspartate 200 is a binding site for 5-phospho-alpha-D-ribose 1-diphosphate.

Belongs to the UPRTase family. The cofactor is Mg(2+).

The catalysed reaction is UMP + diphosphate = 5-phospho-alpha-D-ribose 1-diphosphate + uracil. Its pathway is pyrimidine metabolism; UMP biosynthesis via salvage pathway; UMP from uracil: step 1/1. Its activity is regulated as follows. Allosterically activated by GTP. In terms of biological role, catalyzes the conversion of uracil and 5-phospho-alpha-D-ribose 1-diphosphate (PRPP) to UMP and diphosphate. This is Uracil phosphoribosyltransferase from Lachnoclostridium phytofermentans (strain ATCC 700394 / DSM 18823 / ISDg) (Clostridium phytofermentans).